The sequence spans 134 residues: D-ribose pyranase (134 aa).

Residue His20 is the Proton donor of the active site. Residues Asp28, His101, and 123 to 125 contribute to the substrate site; that span reads YCN.

This sequence belongs to the RbsD / FucU family. RbsD subfamily. In terms of assembly, homodecamer.

The protein localises to the cytoplasm. The enzyme catalyses beta-D-ribopyranose = beta-D-ribofuranose. Its pathway is carbohydrate metabolism; D-ribose degradation; D-ribose 5-phosphate from beta-D-ribopyranose: step 1/2. Functionally, catalyzes the interconversion of beta-pyran and beta-furan forms of D-ribose. This Pseudomonas fluorescens (strain SBW25) protein is D-ribose pyranase.